Consider the following 159-residue polypeptide: Capsid protein (159 aa).

Ser-2 is modified (N-acetylserine; by host).

This sequence belongs to the virgaviridae capsid protein family.

The protein resides in the virion. Capsid protein self-assembles to form rod-shaped virions about 18 nm in diameter with a central canal enclosing the viral genomic RNA. The protein is Capsid protein (CP) of Tomato mosaic virus (strain L) (ToMV).